A 195-amino-acid chain; its full sequence is MSVHIELPRELRPLMKKPLGTLYRGKGRDTIEKFAGELGSPTKLISVGDVTTFHLLEVGIIPDICIVDNRTKRKPVSSDVSARNMDKVYSEVSVDNPAGIITDELIKTLCEAFASEKPIRIFVRGEEDLATLPVILLAPLDAVVLYGQPDEGVVFVKVTEEKKGEIRTLFEKLISKNQNYELDKLRRILDGHKNS.

GTP contacts are provided by Asp49, Val50, Asp68, Glu127, and Asp150.

Belongs to the GTP-dependent DPCK family.

The catalysed reaction is 3'-dephospho-CoA + GTP = GDP + CoA + H(+). It participates in cofactor biosynthesis; coenzyme A biosynthesis. Catalyzes the GTP-dependent phosphorylation of the 3'-hydroxyl group of dephosphocoenzyme A to form coenzyme A (CoA). The sequence is that of GTP-dependent dephospho-CoA kinase from Methanosarcina barkeri (strain Fusaro / DSM 804).